The primary structure comprises 386 residues: Glucose-1-phosphate adenylyltransferase (386 aa).

Alpha-D-glucose 1-phosphate is bound by residues Tyr100, Gly165, 180–181 (EK), and Ser191.

It belongs to the bacterial/plant glucose-1-phosphate adenylyltransferase family. As to quaternary structure, homotetramer.

The catalysed reaction is alpha-D-glucose 1-phosphate + ATP + H(+) = ADP-alpha-D-glucose + diphosphate. It functions in the pathway glycan biosynthesis; glycogen biosynthesis. In terms of biological role, involved in the biosynthesis of ADP-glucose, a building block required for the elongation reactions to produce glycogen. Catalyzes the reaction between ATP and alpha-D-glucose 1-phosphate (G1P) to produce pyrophosphate and ADP-Glc. This chain is Glucose-1-phosphate adenylyltransferase, found in Clostridium beijerinckii (strain ATCC 51743 / NCIMB 8052) (Clostridium acetobutylicum).